The primary structure comprises 2079 residues: von Willebrand factor A domain-containing protein DDB_G0286969 (2079 aa).

One can recognise a VIT domain in the interval 11–147 (EQILPSFISI…ELEIIITYST (137 aa)). A disordered region spans residues 178 to 203 (NENSTTNTNTQTQPQSVNTTTTTTPS). A compositionally biased stretch (low complexity) spans 180-203 (NSTTNTNTQTQPQSVNTTTTTTPS). The 172-residue stretch at 354–525 (ELIFLVDVSE…KVMRQLKRAL (172 aa)) folds into the VWFA domain. Disordered stretches follow at residues 761–800 (PTTL…LKTP), 832–866 (PFVP…TEVK), 956–1139 (AKPV…TKPT), 1155–1203 (NEPA…VSST), and 1239–1294 (DSNT…ADAE). 3 stretches are compositionally biased toward low complexity: residues 785-800 (TTQQ…LKTP), 841-866 (PTTT…TEVK), and 956-973 (AKPV…QQTK). Positions 923 to 957 (EMIKIAEAKAAAEQKAAAEQKAIADAKAAAEQAAK) form a coiled coil. A compositionally biased stretch (basic and acidic residues) spans 974 to 989 (PKADKQSKQNAKDNKQ). The segment covering 992-1006 (KPVVVEQKPPVVTET) has biased composition (low complexity). A compositionally biased stretch (polar residues) spans 1007–1021 (KPTVATESATPTKPT). The span at 1023–1061 (AQAAAAAAAAAQQAAQQAAATTPVKQQPTKQTTPNKSTP) shows a compositional bias: low complexity. Positions 1092 to 1111 (KPVETKPVEQTKPVETKPVE) are enriched in basic and acidic residues. Low complexity predominate over residues 1176-1198 (NNNNNNNNNNNNNNNNNNNNNNN). Residues 1239 to 1272 (DSNTKAPDSLKTTPIFSNGPQGISPSSGNGSNKS) show a composition bias toward polar residues. Residues 1280-1292 (DRGGRGGRDRNAD) are compositionally biased toward basic and acidic residues. The region spanning 1317-1527 (LKKFKFNLNR…LDLIDLRANK (211 aa)) is the MIF4G domain. Residues 1530 to 1755 (PKNSTQTKTK…PAPVEPVKPK (226 aa)) are disordered. Composition is skewed to basic and acidic residues over residues 1538–1550 (TKKD…ERFI), 1557–1599 (QKRE…RDAP), and 1621–1634 (NNRD…DRSG). Low complexity-rich tracts occupy residues 1635–1659 (GKQS…LFGS) and 1688–1699 (SSSIPSIPNRSN). Residues 1725-1740 (SNDRDSRGPSKPDNRK) are compositionally biased toward basic and acidic residues. Positions 1760–1882 (KIEDDISMTL…PLNYLEEAYA (123 aa)) constitute an MI domain.

The protein is von Willebrand factor A domain-containing protein DDB_G0286969 of Dictyostelium discoideum (Social amoeba).